The following is a 465-amino-acid chain: Cysteine--tRNA ligase (465 aa).

C29 is a Zn(2+) binding site. The short motif at P31–N41 is the 'HIGH' region element. Zn(2+)-binding residues include C209, H234, and E238. Residues K266–S270 carry the 'KMSKS' region motif. K269 serves as a coordination point for ATP. S270 carries the phosphoserine modification.

It belongs to the class-I aminoacyl-tRNA synthetase family. In terms of assembly, monomer. Requires Zn(2+) as cofactor.

The protein resides in the cytoplasm. It catalyses the reaction tRNA(Cys) + L-cysteine + ATP = L-cysteinyl-tRNA(Cys) + AMP + diphosphate. This chain is Cysteine--tRNA ligase, found in Bacillus cereus (strain B4264).